We begin with the raw amino-acid sequence, 608 residues long: Albumin (608 aa).

Positions 1–18 are cleaved as a signal peptide; that stretch reads MKWVTFLLLLFVSGSAFS. A propeptide spanning residues 19–24 is cleaved from the precursor; sequence RGVFRR. 3 Albumin domains span residues 19 to 211, 212 to 403, and 404 to 601; these read RGVF…GVKE, KALV…EFQP, and LVEE…NLVT. Position 27 (histidine 27) interacts with Cu cation. Serine 29 is modified (phosphoserine). Residues glutamate 30 and aspartate 37 each coordinate Ca(2+). Cysteine 77 and cysteine 86 are joined by a disulfide. Residues serine 82 and serine 89 each carry the phosphoserine modification. Position 91 (histidine 91) interacts with Zn(2+). 6 cysteine pairs are disulfide-bonded: cysteine 99/cysteine 115, cysteine 114/cysteine 125, cysteine 148/cysteine 193, cysteine 192/cysteine 201, cysteine 224/cysteine 270, and cysteine 269/cysteine 277. Position 229 is an N6-succinyllysine (lysine 229). Glutamate 268 contacts Ca(2+). Zn(2+) contacts are provided by histidine 271 and aspartate 273. Positions 273, 276, and 279 each coordinate Ca(2+). 8 disulfide bridges follow: cysteine 289/cysteine 303, cysteine 302/cysteine 313, cysteine 340/cysteine 385, cysteine 384/cysteine 393, cysteine 416/cysteine 462, cysteine 461/cysteine 472, cysteine 485/cysteine 501, and cysteine 500/cysteine 511. Serine 297 bears the Phosphoserine mark. Serine 443 is subject to Phosphoserine. A phosphothreonine mark is found at threonine 444 and threonine 446. Lysine 460 bears the N6-succinyllysine mark. The residue at position 513 (serine 513) is a Phosphoserine. 2 disulfide bridges follow: cysteine 538–cysteine 583 and cysteine 582–cysteine 591. Lysine 543 bears the N6-succinyllysine mark. The residue at position 558 (lysine 558) is an N6-methyllysine. Threonine 570 carries the post-translational modification Phosphothreonine. An N6-succinyllysine modification is found at lysine 588.

This sequence belongs to the ALB/AFP/VDB family. Part of a complex composed of complement component C3, CLCA1/CLCA3, A2ML1/OH and ALB/serum albumin. Interacts with FCGRT; this interaction regulates ALB homeostasis. Interacts with TASOR. In plasma, occurs in a covalently-linked complex with chromophore-bound alpha-1-microglobulin; this interaction does not prevent fatty acid binding to ALB. Phosphorylated by FAM20C in the extracellular medium. Plasma. Expressed in the granular cells within the cerebellum.

It localises to the secreted. Functionally, binds water, Ca(2+), Na(+), K(+), fatty acids, hormones, bilirubin and drugs. Its main function is the regulation of the colloidal osmotic pressure of blood. Major zinc transporter in plasma, typically binds about 80% of all plasma zinc. Major calcium and magnesium transporter in plasma, binds approximately 45% of circulating calcium and magnesium in plasma. Potentially has more than two calcium-binding sites and might additionally bind calcium in a non-specific manner. The shared binding site between zinc and calcium at residue Asp-273 suggests a crosstalk between zinc and calcium transport in the blood. The rank order of affinity is zinc &gt; calcium &gt; magnesium. Binds to the bacterial siderophore enterobactin and inhibits enterobactin-mediated iron uptake of E.coli from ferric transferrin, and may thereby limit the utilization of iron and growth of enteric bacteria such as E.coli. Does not prevent iron uptake by the bacterial siderophore aerobactin. The chain is Albumin (Alb) from Mus musculus (Mouse).